The sequence spans 1488 residues: Chromosome partition protein MukB (1488 aa).

An ATP-binding site is contributed by 34-41 (GGNGAGKS). Coiled coils occupy residues 326–413 (LEAD…QTRA), 444–472 (LDTF…QTAH), and 509–602 (RHLA…RRAP). The interval 666 to 783 (PGGAEDQRLN…SLPIFGRAAR (118 aa)) is flexible hinge. Coiled coils occupy residues 835 to 923 (EAEI…AKLE), 977 to 1116 (EMLS…AKAG), and 1209 to 1265 (VEAI…LQSV).

Belongs to the SMC family. MukB subfamily. As to quaternary structure, homodimerization via its hinge domain. Binds to DNA via its C-terminal region. Interacts, and probably forms a ternary complex, with MukE and MukF via its C-terminal region. The complex formation is stimulated by calcium or magnesium. Interacts with tubulin-related protein FtsZ.

The protein localises to the cytoplasm. It localises to the nucleoid. Its function is as follows. Plays a central role in chromosome condensation, segregation and cell cycle progression. Functions as a homodimer, which is essential for chromosome partition. Involved in negative DNA supercoiling in vivo, and by this means organize and compact chromosomes. May achieve or facilitate chromosome segregation by condensation DNA from both sides of a centrally located replisome during cell division. The polypeptide is Chromosome partition protein MukB (Salmonella paratyphi C (strain RKS4594)).